A 248-amino-acid chain; its full sequence is Transmembrane protein 182 (248 aa).

Positions 1–26 (MKIHVAGFFAGLFGALATLFILLSFG) are cleaved as a signal peptide. Topologically, residues 27 to 136 (TDYWLLASET…IIYRGFWSVS (110 aa)) are extracellular. N-linked (GlcNAc...) asparagine glycosylation is found at Asn-66 and Asn-119. Residues 137–157 (MLVGVAAVVAGGFIIICAAPF) form a helical membrane-spanning segment. Residues 158-167 (ASHRLYKAGG) lie on the Cytoplasmic side of the membrane. Residues 168 to 188 (GLYLISGFFVLVVTAMYVIWI) form a helical membrane-spanning segment. Residues 189-218 (DVLDVISLYTEYQKLNKCADFELNKTYGLS) lie on the Extracellular side of the membrane. Asn-212 carries an N-linked (GlcNAc...) asparagine glycan. The helical transmembrane segment at 219-239 (FMFAPVGVFFCFLSGLLFLVI) threads the bilayer. Residues 240–248 (GRTVHHQYN) are Cytoplasmic-facing.

The protein belongs to the TMEM182 family.

It is found in the cell membrane. Functionally, may negatively regulate myogenesis and skeletal muscle regeneration. This Danio rerio (Zebrafish) protein is Transmembrane protein 182 (tmem182a).